The chain runs to 412 residues: Allantoate amidohydrolase (412 aa).

The Zn(2+) site is built by His-84, Asp-95, Glu-130, and His-193. Allantoate contacts are provided by Arg-218, Asn-278, and Arg-291. A Zn(2+)-binding site is contributed by His-385.

The protein belongs to the peptidase M20 family. As to quaternary structure, homodimer. Zn(2+) serves as cofactor.

Its subcellular location is the cytoplasm. It catalyses the reaction allantoate + H2O + 2 H(+) = (S)-2-ureidoglycine + NH4(+) + CO2. Its pathway is nitrogen metabolism; (S)-allantoin degradation. Functionally, involved in the anaerobic nitrogen utilization via the assimilation of allantoin. Catalyzes specifically the hydrolysis of allantoate to yield CO2, NH3 and S-ureidoglycine, which is unstable and readily undergoes a second deamination by S-ureidoglycine aminohydrolase AllE to yield S-ureidoglycolate and NH3. This chain is Allantoate amidohydrolase, found in Bacillus subtilis (strain 168).